The following is a 251-amino-acid chain: GTP cyclohydrolase 1 type 2 homolog (251 aa).

The a divalent metal cation site is built by H64, H65, D102, H219, and E223.

The protein belongs to the GTP cyclohydrolase I type 2/NIF3 family. Homohexamer.

In Chlamydia pneumoniae (Chlamydophila pneumoniae), this protein is GTP cyclohydrolase 1 type 2 homolog.